Here is a 487-residue protein sequence, read N- to C-terminus: Beta-barrel assembly-enhancing protease (487 aa).

The first 27 residues, Met1–Ala27, serve as a signal peptide directing secretion. His136 serves as a coordination point for Zn(2+). Residue Glu137 is part of the active site. Zn(2+) is bound by residues His140 and Glu201. Asp205 serves as the catalytic Proton donor. 2 TPR repeats span residues His309 to Asn342 and Asp427 to Gly460.

It belongs to the peptidase M48 family. BepA subfamily. Requires Zn(2+) as cofactor.

The protein resides in the periplasm. Its function is as follows. Functions both as a chaperone and a metalloprotease. Maintains the integrity of the outer membrane by promoting either the assembly or the elimination of outer membrane proteins, depending on their folding state. This chain is Beta-barrel assembly-enhancing protease, found in Salmonella typhi.